An 82-amino-acid chain; its full sequence is UPF0291 protein PEPE_0871 (82 aa).

This sequence belongs to the UPF0291 family.

The protein resides in the cytoplasm. In Pediococcus pentosaceus (strain ATCC 25745 / CCUG 21536 / LMG 10740 / 183-1w), this protein is UPF0291 protein PEPE_0871.